We begin with the raw amino-acid sequence, 1300 residues long: Phospholipid-transporting ATPase IK (1300 aa).

Polar residues predominate over residues 1 to 11 (MGTGPAQTPRS). Residues 1 to 98 (MGTGPAQTPR…SLGQREDLQD (98 aa)) are disordered. Over 1–149 (MGTGPAQTPR…TAKYNFYSFL (149 aa)) the chain is Cytoplasmic. Residues 65–74 (RRHKAQPGRA) are compositionally biased toward basic residues. Residues 150-171 (PLNLYEQFHRVSNLFFLIIIIL) form a helical membrane-spanning segment. The Exoplasmic loop portion of the chain corresponds to 172–177 (QSIPDI). The chain crosses the membrane as a helical span at residues 178-197 (STLPWFSLSTPMVCLLFIRA). Residues 198–381 (TRDLVDDMGR…TKLDLLMNKL (184 aa)) lie on the Cytoplasmic side of the membrane. The helical transmembrane segment at 382–403 (VVVIFISVVLVCLVLAFGFGFS) threads the bilayer. Over 404 to 430 (VKEFKDHHYYLSGVHGSSVAAESFFVF) the chain is Exoplasmic loop. A helical membrane pass occupies residues 431–452 (WSFLILLSVTIPMSMFILSEFI). Topologically, residues 453 to 995 (YLGNSVFIDW…GRWSYVRICK (543 aa)) are cytoplasmic. Residue Asp-495 is the 4-aspartylphosphate intermediate of the active site. Residues Asp-495, Lys-496, Thr-497, Glu-596, Phe-637, Lys-660, Arg-693, Thr-763, Gly-764, Asp-765, Arg-913, and Lys-919 each contribute to the ATP site. Asp-495 serves as a coordination point for Mg(2+). Thr-497 serves as a coordination point for Mg(2+). Asp-939 lines the Mg(2+) pocket. Residues Asn-942 and Asp-943 each contribute to the ATP site. Mg(2+) is bound at residue Asp-943. The helical transmembrane segment at 996–1016 (FLRYFFYKSMASMMVQVWFAC) threads the bilayer. At 1017 to 1028 (YNGFTGQPLYEG) the chain is on the exoplasmic loop side. Residues 1029–1048 (WFLALFNLLYSTLPVLYIGL) form a helical membrane-spanning segment. Over 1049-1078 (FEQDVSAEQSLEKPELYVVGQKDELFNYWV) the chain is Cytoplasmic. The chain crosses the membrane as a helical span at residues 1079-1100 (FVQAIAHGVTTSLVNFFMTLWI). Residues 1101-1112 (SRDTAGPASFSD) lie on the Exoplasmic loop side of the membrane. The helical transmembrane segment at 1113-1135 (HQSFAVVVALSCLLSITMEVILI) threads the bilayer. Topologically, residues 1136–1141 (IKYWTA) are cytoplasmic. Residues 1142–1162 (LCVATILLSLGFYAIMTTTTQ) form a helical membrane-spanning segment. Residues 1163–1182 (SFWLFRVSPTTFPFLYADLS) are Exoplasmic loop-facing. A helical transmembrane segment spans residues 1183 to 1207 (VMSSPSILLVVLLSVSINTFPVLAL). Topologically, residues 1208 to 1300 (RVIFPALKEL…EAASSPKESQ (93 aa)) are cytoplasmic. The disordered stretch occupies residues 1272 to 1300 (RGPGVSSDIASESLDPSDEEAASSPKESQ).

It belongs to the cation transport ATPase (P-type) (TC 3.A.3) family. Type IV subfamily. The cofactor is Mg(2+). Isoform 3 was only detected in testis.

It is found in the cytoplasmic vesicle. Its subcellular location is the secretory vesicle. The protein localises to the acrosome membrane. It localises to the endoplasmic reticulum membrane. It catalyses the reaction ATP + H2O + phospholipidSide 1 = ADP + phosphate + phospholipidSide 2.. The catalysed reaction is a 1,2-diacyl-sn-glycero-3-phospho-L-serine(out) + ATP + H2O = a 1,2-diacyl-sn-glycero-3-phospho-L-serine(in) + ADP + phosphate + H(+). In terms of biological role, P4-ATPase flippase which catalyzes the hydrolysis of ATP coupled to the transport of aminophospholipids from the outer to the inner leaflet of various membranes and ensures the maintenance of asymmetric distribution of phospholipids. Phospholipid translocation also seems to be implicated in vesicle formation and in uptake of lipid signaling molecules. May be responsible for the maintenance of asymmetric distribution of phosphatidylserine (PS) in spermatozoa membranes. Involved in acrosome reactions and binding of spermatozoa to zona pellucida. This Homo sapiens (Human) protein is Phospholipid-transporting ATPase IK.